The chain runs to 634 residues: DNA-directed RNA polymerase subunit gamma (634 aa).

Residues Cys-74, Cys-76, Cys-89, and Cys-92 each contribute to the Zn(2+) site. Asp-471, Asp-473, and Asp-475 together coordinate Mg(2+).

It belongs to the RNA polymerase beta' chain family. RpoC1 subfamily. In cyanobacteria the RNAP catalytic core is composed of 2 alpha, 1 beta, 1 beta', 1 gamma and 1 omega subunit. When a sigma factor is associated with the core the holoenzyme is formed, which can initiate transcription. Requires Mg(2+) as cofactor. Zn(2+) serves as cofactor.

The catalysed reaction is RNA(n) + a ribonucleoside 5'-triphosphate = RNA(n+1) + diphosphate. DNA-dependent RNA polymerase catalyzes the transcription of DNA into RNA using the four ribonucleoside triphosphates as substrates. This is DNA-directed RNA polymerase subunit gamma from Synechococcus sp. (strain CC9311).